A 270-amino-acid chain; its full sequence is Putative pyruvate, phosphate dikinase regulatory protein 2 (270 aa).

151–158 (GVSRTSKT) provides a ligand contact to ADP.

The protein belongs to the pyruvate, phosphate/water dikinase regulatory protein family. PDRP subfamily.

It catalyses the reaction N(tele)-phospho-L-histidyl/L-threonyl-[pyruvate, phosphate dikinase] + ADP = N(tele)-phospho-L-histidyl/O-phospho-L-threonyl-[pyruvate, phosphate dikinase] + AMP + H(+). It carries out the reaction N(tele)-phospho-L-histidyl/O-phospho-L-threonyl-[pyruvate, phosphate dikinase] + phosphate + H(+) = N(tele)-phospho-L-histidyl/L-threonyl-[pyruvate, phosphate dikinase] + diphosphate. Bifunctional serine/threonine kinase and phosphorylase involved in the regulation of the pyruvate, phosphate dikinase (PPDK) by catalyzing its phosphorylation/dephosphorylation. The sequence is that of Putative pyruvate, phosphate dikinase regulatory protein 2 from Listeria welshimeri serovar 6b (strain ATCC 35897 / DSM 20650 / CCUG 15529 / CIP 8149 / NCTC 11857 / SLCC 5334 / V8).